A 350-amino-acid polypeptide reads, in one-letter code: Cytosolic sulfotransferase 18 (350 aa).

M1 is subject to N-acetylmethionine. Residues 1–17 (MESETLTAKATITTTTL) are compositionally biased toward low complexity. The segment at 1–28 (MESETLTAKATITTTTLPSHDETKTEST) is disordered. The span at 19 to 28 (SHDETKTEST) shows a compositional bias: basic and acidic residues. 93 to 98 (KTGTTW) contributes to the 3'-phosphoadenylyl sulfate binding site. H155 (proton acceptor) is an active-site residue. 3'-phosphoadenylyl sulfate is bound by residues R177, S185, Y243, and 313–315 (RKG).

This sequence belongs to the sulfotransferase 1 family. Expressed in roots, leaves and stems. Barely detected in siliques and flowers.

It localises to the cytoplasm. The catalysed reaction is an aliphatic (Z)-desulfo-glucosinolate + 3'-phosphoadenylyl sulfate = a (Z)-omega-(methylsulfanyl)-N-sulfo-alkylhydroximate S-glucoside + adenosine 3',5'-bisphosphate + H(+). Inhibited by phosphoadenosine 5'-phosphate (PAP). Sulfotransferase that utilizes 3'-phospho-5'-adenylyl sulfate (PAPS) as sulfonate donor to catalyze the sulfate conjugation of desulfo-glucosinolates (dsGSs), the final step in the biosynthesis of the glucosinolate core structure. Preferred substrate are the long-chain desulfo-glucosinolates, 7-methylthioheptyl and 8-methylthiooctyl, derived from methionine. Substrate preference is desulfo-benzyl glucosinolate &gt; desulfo-4-methylthiobutyl glucosinolate &gt; desulfo-6-methylthiohexyl glucosinolate &gt; desulfo-3-methylthiopropyl glucosinolate &gt; desulfo-indol-3-yl methyl glucosinolate &gt; desulfo-singrin &gt; desulfo-3-butenyl glucosinolate. The chain is Cytosolic sulfotransferase 18 (SOT18) from Arabidopsis thaliana (Mouse-ear cress).